The chain runs to 185 residues: Adenine phosphoribosyltransferase (185 aa).

The protein belongs to the purine/pyrimidine phosphoribosyltransferase family. Homodimer.

The protein localises to the cytoplasm. It catalyses the reaction AMP + diphosphate = 5-phospho-alpha-D-ribose 1-diphosphate + adenine. It functions in the pathway purine metabolism; AMP biosynthesis via salvage pathway; AMP from adenine: step 1/1. Its function is as follows. Catalyzes a salvage reaction resulting in the formation of AMP, that is energically less costly than de novo synthesis. The protein is Adenine phosphoribosyltransferase of Pectobacterium atrosepticum (strain SCRI 1043 / ATCC BAA-672) (Erwinia carotovora subsp. atroseptica).